We begin with the raw amino-acid sequence, 198 residues long: MTAMRNAEVSRNTLETKIAVAINLDGTGISRLNSGVGFFDHMLDQIARHGMMDISVECQGDLHIDAHHTVEDVGIALGQAFSKALGDKKGIRRYAHAYVPLDEALSRVVLDISGRPGLEFNVEFTRARIGEFDVDLVSEFFQGFVNHAAITLHIDNLRGKNAHHQAETIFKAFGRALRAAVELDPRMVGIMPSTKGSL.

Belongs to the imidazoleglycerol-phosphate dehydratase family.

It is found in the cytoplasm. It catalyses the reaction D-erythro-1-(imidazol-4-yl)glycerol 3-phosphate = 3-(imidazol-4-yl)-2-oxopropyl phosphate + H2O. The protein operates within amino-acid biosynthesis; L-histidine biosynthesis; L-histidine from 5-phospho-alpha-D-ribose 1-diphosphate: step 6/9. The sequence is that of Imidazoleglycerol-phosphate dehydratase from Methylobacillus flagellatus (strain ATCC 51484 / DSM 6875 / VKM B-1610 / KT).